A 152-amino-acid polypeptide reads, in one-letter code: UPF0266 membrane protein YobD (152 aa).

3 helical membrane passes run 6–26 (LVLILFIAALLAYALYDQFIM), 45–65 (VDSVIFVGLVAILIYNNVTSH), and 67–87 (AQMTTWLLSALALMGFYIFWI).

Belongs to the UPF0266 family.

The protein resides in the cell inner membrane. The sequence is that of UPF0266 membrane protein YobD from Salmonella choleraesuis (strain SC-B67).